The primary structure comprises 374 residues: Chaperone protein DnaJ (374 aa).

A J domain is found at 5-70 (DYYEVLGVER…SKRAAFDQYG (66 aa)). The CR-type zinc finger occupies 133–211 (GTTVSIRVPT…CHGEGRVEEY (79 aa)). Zn(2+) contacts are provided by Cys-146, Cys-149, Cys-163, Cys-166, Cys-185, Cys-188, Cys-199, and Cys-202. 4 CXXCXGXG motif repeats span residues 146 to 153 (CQPCDGSG), 163 to 170 (CPTCGGIG), 185 to 192 (CPRCHGQG), and 199 to 206 (CTSCHGEG).

The protein belongs to the DnaJ family. As to quaternary structure, homodimer. It depends on Zn(2+) as a cofactor.

It is found in the cytoplasm. Its function is as follows. Participates actively in the response to hyperosmotic and heat shock by preventing the aggregation of stress-denatured proteins and by disaggregating proteins, also in an autonomous, DnaK-independent fashion. Unfolded proteins bind initially to DnaJ; upon interaction with the DnaJ-bound protein, DnaK hydrolyzes its bound ATP, resulting in the formation of a stable complex. GrpE releases ADP from DnaK; ATP binding to DnaK triggers the release of the substrate protein, thus completing the reaction cycle. Several rounds of ATP-dependent interactions between DnaJ, DnaK and GrpE are required for fully efficient folding. Also involved, together with DnaK and GrpE, in the DNA replication of plasmids through activation of initiation proteins. The sequence is that of Chaperone protein DnaJ from Pseudomonas putida (strain ATCC 700007 / DSM 6899 / JCM 31910 / BCRC 17059 / LMG 24140 / F1).